Here is a 70-residue protein sequence, read N- to C-terminus: Protein SlyX homolog (70 aa).

This sequence belongs to the SlyX family.

This Shewanella sp. (strain MR-7) protein is Protein SlyX homolog.